We begin with the raw amino-acid sequence, 55 residues long: Large ribosomal subunit protein bL33 (55 aa).

Belongs to the bacterial ribosomal protein bL33 family.

The protein is Large ribosomal subunit protein bL33 of Methylobacterium nodulans (strain LMG 21967 / CNCM I-2342 / ORS 2060).